Consider the following 567-residue polypeptide: Urease subunit alpha (567 aa).

Residues 129–567 (GGIDTHIHFI…LPMAQRYFLF (439 aa)) enclose the Urease domain. 3 residues coordinate Ni(2+): H134, H136, and K217. At K217 the chain carries N6-carboxylysine. H219 is a substrate binding site. Residues H246 and H272 each coordinate Ni(2+). H320 (proton donor) is an active-site residue. D360 lines the Ni(2+) pocket.

The protein belongs to the metallo-dependent hydrolases superfamily. Urease alpha subunit family. In terms of assembly, probable heterotrimer of UreA (gamma), UreB (beta) and UreC (alpha) subunits. Three heterotrimers associate to form the active enzyme. The trimeric urease interacts with an accessory complex composed of UreD, UreF and UreG, which is required for the assembly of the nickel containing metallocenter of UreC. The UreE protein may also play a direct role in nickel transfer to the urease apoprotein. The cofactor is Ni cation. In terms of processing, carboxylation allows a single lysine to coordinate two nickel ions.

The protein localises to the cytoplasm. The enzyme catalyses urea + 2 H2O + H(+) = hydrogencarbonate + 2 NH4(+). Its pathway is nitrogen metabolism; urea degradation; CO(2) and NH(3) from urea (urease route): step 1/1. The polypeptide is Urease subunit alpha (Proteus mirabilis (strain HI4320)).